We begin with the raw amino-acid sequence, 240 residues long: MLTLGVNIDHVATIRQARRTVEPDPLAAAVLAELGGADGITVHLREDRRHIQDRDVRLLRQTVRTHLNLEMAPTEEMISIALDIKPDYVTLVPEKREEVTTEGGIDLVSNFTRFAQVVDQLQGAGIPVSWFIDADPAQIEAASKTGAKFIELHTGKYAEALNEESRAQELESLKKGCEQALSLGLRVNAGHGLTYWNVYPVACLPGMEELNIGHSIISRAVLIGIDKAVREMKLAMRGQV.

Residue N7 coordinates 3-amino-2-oxopropyl phosphate. 1-deoxy-D-xylulose 5-phosphate is bound at residue 9-10 (DH). R18 lines the 3-amino-2-oxopropyl phosphate pocket. Residue H43 is the Proton acceptor of the active site. 1-deoxy-D-xylulose 5-phosphate-binding residues include R45 and H50. E70 acts as the Proton acceptor in catalysis. T100 contributes to the 1-deoxy-D-xylulose 5-phosphate binding site. H191 serves as the catalytic Proton donor. Residues G192 and 213 to 214 (GH) contribute to the 3-amino-2-oxopropyl phosphate site.

This sequence belongs to the PNP synthase family. Homooctamer; tetramer of dimers.

The protein resides in the cytoplasm. The enzyme catalyses 3-amino-2-oxopropyl phosphate + 1-deoxy-D-xylulose 5-phosphate = pyridoxine 5'-phosphate + phosphate + 2 H2O + H(+). It functions in the pathway cofactor biosynthesis; pyridoxine 5'-phosphate biosynthesis; pyridoxine 5'-phosphate from D-erythrose 4-phosphate: step 5/5. Its function is as follows. Catalyzes the complicated ring closure reaction between the two acyclic compounds 1-deoxy-D-xylulose-5-phosphate (DXP) and 3-amino-2-oxopropyl phosphate (1-amino-acetone-3-phosphate or AAP) to form pyridoxine 5'-phosphate (PNP) and inorganic phosphate. This chain is Pyridoxine 5'-phosphate synthase, found in Gloeothece citriformis (strain PCC 7424) (Cyanothece sp. (strain PCC 7424)).